A 171-amino-acid polypeptide reads, in one-letter code: MDKAGKSAALENLKGVFEGAGVVVVTHYAGLTVAEMTKLRGLLRKDGAHFKVVKNRLAKIALGGVGGDKAQDLFQGPVAIAYSPDPVAAAKAADEFSRENSKLVIIGAVMGEQVLDAKGVEALAKLPSLDQLRGKIIGVIQAPATKVAGVIQAPASQLARVVSAYASKDAA.

This sequence belongs to the universal ribosomal protein uL10 family. As to quaternary structure, part of the ribosomal stalk of the 50S ribosomal subunit. The N-terminus interacts with L11 and the large rRNA to form the base of the stalk. The C-terminus forms an elongated spine to which L12 dimers bind in a sequential fashion forming a multimeric L10(L12)X complex.

Its function is as follows. Forms part of the ribosomal stalk, playing a central role in the interaction of the ribosome with GTP-bound translation factors. This is Large ribosomal subunit protein uL10 from Hyphomonas neptunium (strain ATCC 15444).